A 433-amino-acid polypeptide reads, in one-letter code: Enolase (433 aa).

Glutamine 163 contacts (2R)-2-phosphoglycerate. Glutamate 205 functions as the Proton donor in the catalytic mechanism. Mg(2+) is bound by residues aspartate 242, glutamate 291, and aspartate 318. Lysine 343, arginine 372, serine 373, and lysine 394 together coordinate (2R)-2-phosphoglycerate. The active-site Proton acceptor is the lysine 343.

It belongs to the enolase family. The cofactor is Mg(2+).

It localises to the cytoplasm. The protein localises to the secreted. The protein resides in the cell surface. The catalysed reaction is (2R)-2-phosphoglycerate = phosphoenolpyruvate + H2O. It participates in carbohydrate degradation; glycolysis; pyruvate from D-glyceraldehyde 3-phosphate: step 4/5. Its function is as follows. Catalyzes the reversible conversion of 2-phosphoglycerate (2-PG) into phosphoenolpyruvate (PEP). It is essential for the degradation of carbohydrates via glycolysis. The protein is Enolase of Methylibium petroleiphilum (strain ATCC BAA-1232 / LMG 22953 / PM1).